The chain runs to 192 residues: Transmembrane protein 276 (192 aa).

A signal peptide spans Met1 to Ala32. 4 consecutive transmembrane segments (helical) span residues Gly35 to Leu55, Ala63 to Val83, Ser89 to Pro109, and Val114 to Thr134.

The protein localises to the membrane. This is Transmembrane protein 276 from Homo sapiens (Human).